Consider the following 310-residue polypeptide: MTATIDNLTSRERATVLADALPWLQRYRDKIVVVKYGGNAMVDEELKAAFAADMVFLRTVGVRPVVVHGGGPQISQMLQRLGIEGEFKGGFRVTSPEVLEIVRMVLFGQVGRDLVGLINSHGPYAVGTSGEDAGLFRAEKRLVEIDGELTDIGQVGNITAVNASSLMGIIDAGRIPVVSTIAPGDDGSVYNINADTAAGALAAALSAERLLILTNVEGLYTDWPNKDSLVSVIGAERLREKLSALGSGMIPKMESCVDAVIHGVSAAHVIDGRVAHSVLLELLTSGGVGTMVVPDTEMTNGTVYRKDNHV.

Substrate is bound by residues 70–71 (GG), Arg-92, and Asn-191.

Belongs to the acetylglutamate kinase family. ArgB subfamily.

The protein localises to the cytoplasm. The enzyme catalyses N-acetyl-L-glutamate + ATP = N-acetyl-L-glutamyl 5-phosphate + ADP. It functions in the pathway amino-acid biosynthesis; L-arginine biosynthesis; N(2)-acetyl-L-ornithine from L-glutamate: step 2/4. Its function is as follows. Catalyzes the ATP-dependent phosphorylation of N-acetyl-L-glutamate. The sequence is that of Acetylglutamate kinase from Corynebacterium diphtheriae (strain ATCC 700971 / NCTC 13129 / Biotype gravis).